We begin with the raw amino-acid sequence, 677 residues long: Protein hook (677 aa).

One can recognise a Calponin-homology (CH) domain in the interval Asn6–Ala123. Coiled coils occupy residues Glu135–His436 and Gln478–Val588.

This sequence belongs to the hook family. Homodimer. Interacts with microtubules via its N-terminus.

The protein resides in the cytoplasm. It localises to the cytoskeleton. Its subcellular location is the endosome. It is found in the synapse. Involved in endocytic trafficking by stabilizing organelles of the endocytic pathway. Probably acts as a cytoskeletal linker protein required to tether endosome vesicles to the cytoskeleton. Involved in modulation of endocytosis at stages required for down-regulation of membrane proteins that control synapse size. Not involved in synaptic vesicle recycling. Required in R7 cells for boss endocytosis into multivesicular bodies (MVBs). Has a role in regulating adult longevity. The protein is Protein hook of Drosophila persimilis (Fruit fly).